The following is a 690-amino-acid chain: Cyclic nucleotide-gated channel alpha-1 (690 aa).

The Cytoplasmic segment spans residues 1–163 (MKKVIINTWH…VVIDPSGNTY (163 aa)). Disordered regions lie at residues 33-76 (GACS…PSQR) and 88-151 (NVNN…EEKK). The segment covering 40-54 (GDDDDSASMFEESET) has biased composition (acidic residues). The segment covering 64-76 (RSNTHGSGQPSQR) has biased composition (polar residues). A compositionally biased stretch (basic and acidic residues) spans 111–151 (SKPDDKNENKKDPEKKKKKEKDKDKKKKEEKGKDKKEEEKK). Residues 164 to 185 (YNWLFCITLPVMYNWTMIIARA) form a helical membrane-spanning segment. Topologically, residues 186 to 195 (CFDELQSDYL) are extracellular. The chain crosses the membrane as a helical span at residues 196 to 215 (EYWLAFDYLSDVVYLLDMFV). At 216–241 (RTRTGYLEQGLLVKEERKLIDKYKST) the chain is on the cytoplasmic side. The chain crosses the membrane as a helical span at residues 242-251 (FQFKLDVLSV). Residues 252-264 (IPTDLLYIKFGWN) are Extracellular-facing. The helical transmembrane segment at 265–283 (YPEIRLNRLLRISRMFEFF) threads the bilayer. Topologically, residues 284–291 (QRTETRTN) are cytoplasmic. A helical membrane pass occupies residues 292-315 (YPNIFRISNLVMYIIIIIHWNACV). Residues 293–402 (PNIFRISNLV…NIGSMISNMN (110 aa)) are ion conduction pathway. Residues 316 to 342 (YFSISKAIGFGNDTWVYPDVNDPDFGR) are Extracellular-facing. N-linked (GlcNAc...) asparagine glycosylation occurs at N327. A run of 2 helical transmembrane segments spans residues 343 to 373 (LARKYVYSLYWSTLTLTTIGETPPPVRDSEY) and 374 to 399 (FFVVADFLIGVLIFATIVGNIGSMIS). A selectivity filter region spans residues 360-363 (TIGE). The Cytoplasmic segment spans residues 400–690 (NMNAARAEFQ…ESGPTDSTQD (291 aa)). Positions 403-479 (AARAEFQARI…DTLKKVRIFA (77 aa)) are C-linker. The cyclic nucleotide-binding domain (CNBD) stretch occupies residues 482–603 (EAGLLVELVL…EEKGKQILMK (122 aa)). 3',5'-cyclic GMP contacts are provided by G543, S546, R559, and T560. Residues R559 and T560 each contribute to the 3',5'-cyclic AMP site. Residues 621–664 (LEEKVTRMESSVDLLQTRFARILAEYESMQQKLKQRLTKVEKFL) adopt a coiled-coil conformation.

Belongs to the cyclic nucleotide-gated cation channel (TC 1.A.1.5) family. CNGA1 subfamily. In terms of assembly, forms a heterotetramer with CNGB1 in a 3:1 ratio. May also form cyclic nucleotide-activated homotetrameric channels, that are efficiently activated by saturating cGMP, but poorly activated by saturating cAMP compared to the heterotetramer with CNGB1. The channel binds Ca(2+)-bound CALM1 via CaM1 and CaM2 regions of the CNGB1 subunit; this interaction modulates the affinity of the channel for cNMPs in response to intracellular Ca(2+) levels. In terms of tissue distribution, expressed in the retina, in rod cells (at protein level).

Its subcellular location is the cell membrane. It carries out the reaction Ca(2+)(in) = Ca(2+)(out). The enzyme catalyses Na(+)(in) = Na(+)(out). It catalyses the reaction K(+)(in) = K(+)(out). The catalysed reaction is NH4(+)(in) = NH4(+)(out). It carries out the reaction Rb(+)(in) = Rb(+)(out). The enzyme catalyses Li(+)(in) = Li(+)(out). It catalyses the reaction Cs(+)(in) = Cs(+)(out). Its function is as follows. Pore-forming subunit of the rod cyclic nucleotide-gated channel. Mediates rod photoresponses at dim light converting transient changes in intracellular cGMP levels into electrical signals. In the dark, cGMP levels are high and keep the channel open enabling a steady inward current carried by Na(+) and Ca(2+) ions that leads to membrane depolarization and neurotransmitter release from synaptic terminals. Upon photon absorption cGMP levels decline leading to channel closure and membrane hyperpolarization that ultimately slows neurotransmitter release and signals the presence of light, the end point of the phototransduction cascade. Conducts cGMP- and cAMP-gated ion currents, with permeability for monovalent and divalent cations. The selectivity for Ca(2+) over Na(+) increases with cGMP concentrations, whereas the selectivity among monovalent ions is independent of the cGMP levels. This is Cyclic nucleotide-gated channel alpha-1 from Bos taurus (Bovine).